Here is a 360-residue protein sequence, read N- to C-terminus: Phospho-N-acetylmuramoyl-pentapeptide-transferase (360 aa).

Helical transmembrane passes span 2–22, 26–46, 73–93, 97–117, 134–154, 168–188, 199–219, 236–256, 263–283, 288–308, and 339–359; these read LVWV…FQYL, AILG…VMIR, TMGG…WADL, YVLI…VDDW, YFWQ…TAHL, ITLA…VGGS, GLAI…AYLS, TGEL…FLWF, VFMG…VAVI, LVFF…ILQV, and IVRF…TLKI.

The protein belongs to the glycosyltransferase 4 family. MraY subfamily. The cofactor is Mg(2+).

It localises to the cell inner membrane. The catalysed reaction is UDP-N-acetyl-alpha-D-muramoyl-L-alanyl-gamma-D-glutamyl-meso-2,6-diaminopimeloyl-D-alanyl-D-alanine + di-trans,octa-cis-undecaprenyl phosphate = di-trans,octa-cis-undecaprenyl diphospho-N-acetyl-alpha-D-muramoyl-L-alanyl-D-glutamyl-meso-2,6-diaminopimeloyl-D-alanyl-D-alanine + UMP. Its pathway is cell wall biogenesis; peptidoglycan biosynthesis. Functionally, catalyzes the initial step of the lipid cycle reactions in the biosynthesis of the cell wall peptidoglycan: transfers peptidoglycan precursor phospho-MurNAc-pentapeptide from UDP-MurNAc-pentapeptide onto the lipid carrier undecaprenyl phosphate, yielding undecaprenyl-pyrophosphoryl-MurNAc-pentapeptide, known as lipid I. This chain is Phospho-N-acetylmuramoyl-pentapeptide-transferase, found in Hahella chejuensis (strain KCTC 2396).